Reading from the N-terminus, the 204-residue chain is Ribonuclease HII (204 aa).

Positions Met1–Leu197 constitute an RNase H type-2 domain. A divalent metal cation-binding residues include Asp6, Glu7, and Asp103.

It belongs to the RNase HII family. Requires Mn(2+) as cofactor. It depends on Mg(2+) as a cofactor.

It localises to the cytoplasm. The catalysed reaction is Endonucleolytic cleavage to 5'-phosphomonoester.. Endonuclease that specifically degrades the RNA of RNA-DNA hybrids. The polypeptide is Ribonuclease HII (Helicobacter pylori (strain P12)).